A 245-amino-acid chain; its full sequence is UPF0246 protein Ldb2075 (245 aa).

Belongs to the UPF0246 family.

The chain is UPF0246 protein Ldb2075 from Lactobacillus delbrueckii subsp. bulgaricus (strain ATCC 11842 / DSM 20081 / BCRC 10696 / JCM 1002 / NBRC 13953 / NCIMB 11778 / NCTC 12712 / WDCM 00102 / Lb 14).